The chain runs to 29 residues: U-homostoxin-Hdu1a (29 aa).

The O-linked (GlcNAc...) threonine glycan is linked to Thr1. 2 cysteine pairs are disulfide-bonded: Cys7–Cys19 and Cys10–Cys25.

It belongs to the sea anemone BBH family.

Its subcellular location is the secreted. It is found in the nematocyst. This Homostichanthus duerdeni (Sea anemone) protein is U-homostoxin-Hdu1a.